Consider the following 397-residue polypeptide: L-rhamnonate dehydratase (397 aa).

Residues H25 and R51 each contribute to the substrate site. Residues D217, E243, and E271 each contribute to the Mg(2+) site. H321 (proton acceptor) is an active-site residue. Residue E341 participates in substrate binding.

This sequence belongs to the mandelate racemase/muconate lactonizing enzyme family. RhamD subfamily. As to quaternary structure, homooctamer; tetramer of dimers. The cofactor is Mg(2+).

It catalyses the reaction L-rhamnonate = 2-dehydro-3-deoxy-L-rhamnonate + H2O. Its pathway is carbohydrate degradation; L-rhamnose degradation. Functionally, catalyzes the dehydration of L-rhamnonate to 2-keto-3-deoxy-L-rhamnonate (KDR). Also shows activity with L-lyxonate and L-mannonate, with much lower catalytic efficiency. Catalyzes the third step in an alternative pathway for rhamnose utilization that does not involve phosphorylated intermediates. This Sphingomonas sp. (strain SKA58) protein is L-rhamnonate dehydratase.